Consider the following 460-residue polypeptide: Muscarinic acetylcholine receptor M1 (460 aa).

The Extracellular segment spans residues 1–22; that stretch reads MNTSAPPAVSPNITVLAPGKGP. N-linked (GlcNAc...) asparagine glycosylation is found at Asn-2 and Asn-12. Residues 23 to 48 form a helical membrane-spanning segment; it reads WQVAFIGITTGLLSLATVTGNLLVLI. Topologically, residues 49-62 are cytoplasmic; the sequence is SFKVNTELKTVNNY. A helical membrane pass occupies residues 63 to 84; sequence FLLSLACADLIIGTFSMNLYTT. Topologically, residues 85–95 are extracellular; the sequence is YLLMGHWALGT. Residues 96-121 traverse the membrane as a helical segment; sequence LACDLWLALDYVASNASVMNLLLISF. A disulfide bond links Cys-98 and Cys-178. Residues 122–142 lie on the Cytoplasmic side of the membrane; sequence DRYFSVTRPLSYRAKRTPRRA. The helical transmembrane segment at 143-164 threads the bilayer; sequence ALMIGLAWLVSFVLWAPAILFW. Over 165-185 the chain is Extracellular; it reads QYLVGERTVLAGQCYIQFLSQ. The helical transmembrane segment at 186-209 threads the bilayer; it reads PIITFGTAMAAFYLPVTVMCTLYW. The Cytoplasmic segment spans residues 210-366; sequence RIYRETENRA…LVKEKKAART (157 aa). 3 disordered regions span residues 225–256, 274–296, and 310–351; these read LQGS…ETPP, WKEE…GEEP, and EAQA…QLAK. Thr-230 carries the phosphothreonine modification. Residues 238–247 are compositionally biased toward low complexity; that stretch reads SSSSERSQPG. Positions 328-343 are enriched in basic residues; that stretch reads RPTRKGRERAGKGQKP. The helical transmembrane segment at 367 to 390 threads the bilayer; it reads LSAILLAFIVTWTPYNIMVLVSTF. Residues 391-397 lie on the Extracellular side of the membrane; that stretch reads CKDCVPE. Residues 398–420 traverse the membrane as a helical segment; the sequence is TLWELGYWLCYVNSTINPMCYAL. Residues 421–460 are Cytoplasmic-facing; sequence CNKAFRDTFRLLLLCRWDKRRWRKIPKRPGSVHRTPSRQC. At Thr-428 the chain carries Phosphothreonine. At Ser-451 the chain carries Phosphoserine. Phosphothreonine is present on Thr-455. Ser-457 bears the Phosphoserine mark.

The protein belongs to the G-protein coupled receptor 1 family. Muscarinic acetylcholine receptor subfamily. CHRM1 sub-subfamily. In terms of assembly, interacts with GPRASP2. Interacts with TMEM147.

The protein resides in the cell membrane. It is found in the postsynaptic cell membrane. In terms of biological role, the muscarinic acetylcholine receptor mediates various cellular responses, including inhibition of adenylate cyclase, breakdown of phosphoinositides and modulation of potassium channels through the action of G proteins. Primary transducing effect is Pi turnover. The chain is Muscarinic acetylcholine receptor M1 (CHRM1) from Sus scrofa (Pig).